The primary structure comprises 231 residues: Ribonuclease 3 (231 aa).

One can recognise an RNase III domain in the interval Leu-12 to Gly-139. Glu-52 contacts Mg(2+). The active site involves Asp-56. Positions 125 and 128 each coordinate Mg(2+). Glu-128 is an active-site residue. Residues Asp-165 to Thr-231 enclose the DRBM domain.

This sequence belongs to the ribonuclease III family. Homodimer. Mg(2+) is required as a cofactor.

Its subcellular location is the cytoplasm. It catalyses the reaction Endonucleolytic cleavage to 5'-phosphomonoester.. Digests double-stranded RNA. Involved in the processing of primary rRNA transcript to yield the immediate precursors to the large and small rRNAs (23S and 16S). Processes some mRNAs, and tRNAs when they are encoded in the rRNA operon. Processes pre-crRNA and tracrRNA of type II CRISPR loci if present in the organism. The sequence is that of Ribonuclease 3 from Mycoplasmopsis synoviae (strain 53) (Mycoplasma synoviae).